Reading from the N-terminus, the 335-residue chain is Methionyl-tRNA formyltransferase (335 aa).

122 to 125 provides a ligand contact to (6S)-5,6,7,8-tetrahydrofolate; the sequence is SLLP. The disordered stretch occupies residues 203–222; sequence DSHGPLGEPQDPAKVSKAPR.

The protein belongs to the Fmt family.

The catalysed reaction is L-methionyl-tRNA(fMet) + (6R)-10-formyltetrahydrofolate = N-formyl-L-methionyl-tRNA(fMet) + (6S)-5,6,7,8-tetrahydrofolate + H(+). Functionally, attaches a formyl group to the free amino group of methionyl-tRNA(fMet). The formyl group appears to play a dual role in the initiator identity of N-formylmethionyl-tRNA by promoting its recognition by IF2 and preventing the misappropriation of this tRNA by the elongation apparatus. The sequence is that of Methionyl-tRNA formyltransferase from Rhodopirellula baltica (strain DSM 10527 / NCIMB 13988 / SH1).